Here is a 346-residue protein sequence, read N- to C-terminus: Propane 2-monooxygenase, reductase component (346 aa).

In terms of domain architecture, 2Fe-2S ferredoxin-type spans 5-94 (HKISFEPVDI…DCEIELLNFD (90 aa)). Residues cysteine 39, cysteine 44, cysteine 46, and cysteine 78 each contribute to the [2Fe-2S] cluster site. The FAD-binding FR-type domain occupies 104 to 205 (IQDVTTKVAA…NGPYGSCTLR (102 aa)).

It belongs to the bacterial ring-hydroxylating dioxygenase ferredoxin reductase family. The propane 2-monooxygenase multicomponent enzyme system is composed of an electron transfer component and a monooxygenase component interacting with the effector protein PrmD. The electron transfer component is composed of a reductase (PrmB), and the monooxygenase component is formed by a large subunit (PrmA) and a small subunit (PrmC). FAD serves as cofactor. The cofactor is [2Fe-2S] cluster.

In terms of biological role, reductase component of the propane 2-monooxygenase multicomponent enzyme system which is involved in the degradation of propane via the O2-dependent hydroxylation of propane. Reductase catalyzes the transfer of electrons from NADH or NADPH to monooxygenase. This Gordonia sp. (strain TY-5) protein is Propane 2-monooxygenase, reductase component.